Consider the following 572-residue polypeptide: Arginine--tRNA ligase (572 aa).

Positions 122–132 match the 'HIGH' region motif; that stretch reads PNLAKEMHVGH.

This sequence belongs to the class-I aminoacyl-tRNA synthetase family. In terms of assembly, monomer.

It localises to the cytoplasm. The enzyme catalyses tRNA(Arg) + L-arginine + ATP = L-arginyl-tRNA(Arg) + AMP + diphosphate. The protein is Arginine--tRNA ligase of Neisseria gonorrhoeae (strain ATCC 700825 / FA 1090).